Here is a 145-residue protein sequence, read N- to C-terminus: Large ribosomal subunit protein uL11 (145 aa).

It belongs to the universal ribosomal protein uL11 family. In terms of assembly, part of the ribosomal stalk of the 50S ribosomal subunit. Interacts with L10 and the large rRNA to form the base of the stalk. L10 forms an elongated spine to which L12 dimers bind in a sequential fashion forming a multimeric L10(L12)X complex. One or more lysine residues are methylated.

Functionally, forms part of the ribosomal stalk which helps the ribosome interact with GTP-bound translation factors. This chain is Large ribosomal subunit protein uL11, found in Persephonella marina (strain DSM 14350 / EX-H1).